Consider the following 84-residue polypeptide: Small ribosomal subunit protein bS16 (84 aa).

This sequence belongs to the bacterial ribosomal protein bS16 family.

The polypeptide is Small ribosomal subunit protein bS16 (Burkholderia mallei (strain NCTC 10247)).